The following is a 480-amino-acid chain: Ribulose bisphosphate carboxylase large chain (480 aa).

Residues 1 to 2 (MS) constitute a propeptide that is removed on maturation. N-acetylproline is present on Pro3. At Lys14 the chain carries N6,N6,N6-trimethyllysine. Residues Asn123 and Thr173 each coordinate substrate. Catalysis depends on Lys175, which acts as the Proton acceptor. Lys177 is a binding site for substrate. Mg(2+) contacts are provided by Lys201, Asp203, and Glu204. Residue Lys201 is modified to N6-carboxylysine. His294 serves as the catalytic Proton acceptor. 3 residues coordinate substrate: Arg295, His327, and Ser379.

The protein belongs to the RuBisCO large chain family. Type I subfamily. In terms of assembly, heterohexadecamer of 8 large chains and 8 small chains; disulfide-linked. The disulfide link is formed within the large subunit homodimers. Mg(2+) serves as cofactor. Post-translationally, the disulfide bond which can form in the large chain dimeric partners within the hexadecamer appears to be associated with oxidative stress and protein turnover.

It localises to the plastid. Its subcellular location is the chloroplast. The enzyme catalyses 2 (2R)-3-phosphoglycerate + 2 H(+) = D-ribulose 1,5-bisphosphate + CO2 + H2O. It catalyses the reaction D-ribulose 1,5-bisphosphate + O2 = 2-phosphoglycolate + (2R)-3-phosphoglycerate + 2 H(+). In terms of biological role, ruBisCO catalyzes two reactions: the carboxylation of D-ribulose 1,5-bisphosphate, the primary event in carbon dioxide fixation, as well as the oxidative fragmentation of the pentose substrate in the photorespiration process. Both reactions occur simultaneously and in competition at the same active site. In Mollugo verticillata (Green carpetweed), this protein is Ribulose bisphosphate carboxylase large chain.